Here is a 416-residue protein sequence, read N- to C-terminus: Ribosome biogenesis protein WDR12 homolog (416 aa).

The tract at residues 7–89 is ubiquitin-like (UBL) domain; it reads VQVRFFTKQK…ESVVEIEYLE (83 aa). WD repeat units follow at residues 101–138, 140–184, 189–228, 259–297, 299–338, 344–384, and 388–416; these read VHDDWVSSVSRCKNCIITGSYDNCVQIWDDQGSCLAKV, GHTS…ASCV, GHTQSVDSISINPSATKFCSGSWDKTLKLWSAVVNPEGGD, GHTQAVSSVVWMDRTTICSAGWDHCIRLWDAESGVNKQT, TGSKVFCEIAYSALNQCLASGSADKYIRLWDHRAEDGQVV, SHQG…TPLY, and GHQDKVMCVRWSSSRHLMSGGTDNQLILY. The interval 226–245 is disordered; the sequence is GGDEGENGSLSKKQKTTGVK.

It belongs to the WD repeat WDR12/YTM1 family.

The protein resides in the nucleus. It localises to the nucleolus. The protein localises to the nucleoplasm. Required for maturation of ribosomal RNAs and formation of the large ribosomal subunit. This is Ribosome biogenesis protein WDR12 homolog from Nematostella vectensis (Starlet sea anemone).